A 396-amino-acid polypeptide reads, in one-letter code: Elongation factor Tu (396 aa).

Residues 10–206 (KPHLNIGTIG…AVDENVPDPV (197 aa)) enclose the tr-type G domain. A G1 region spans residues 19-26 (GHVDHGKT). 19 to 26 (GHVDHGKT) serves as a coordination point for GTP. Thr26 is a Mg(2+) binding site. The segment at 62–66 (GITIN) is G2. Residues 83-86 (DAPG) form a G3 region. Residues 83-87 (DAPGH) and 138-141 (NKSD) contribute to the GTP site. The segment at 138 to 141 (NKSD) is G4. Positions 176-178 (SAL) are G5.

It belongs to the TRAFAC class translation factor GTPase superfamily. Classic translation factor GTPase family. EF-Tu/EF-1A subfamily. Monomer.

The protein resides in the cytoplasm. It carries out the reaction GTP + H2O = GDP + phosphate + H(+). Its function is as follows. GTP hydrolase that promotes the GTP-dependent binding of aminoacyl-tRNA to the A-site of ribosomes during protein biosynthesis. In Kocuria rhizophila (strain ATCC 9341 / DSM 348 / NBRC 103217 / DC2201), this protein is Elongation factor Tu.